The chain runs to 218 residues: Adenylate kinase (218 aa).

10 to 15 (GAGKGT) contributes to the ATP binding site. Residues 30 to 59 (STGDMLRAAVKAGTPLGLEAKKVMDAGGLV) form an NMP region. AMP is bound by residues T31, R36, 57–59 (GLV), 85–88 (GFPR), and Q92. The segment at 122–159 (ERRVHPASGRSYHVRFNPPKAEGVDDVTGEPLVQRDDD) is LID. Residues R123 and 132–133 (SY) each bind ATP. The AMP site is built by R156 and R167. G203 provides a ligand contact to ATP.

The protein belongs to the adenylate kinase family. Monomer.

The protein resides in the cytoplasm. It carries out the reaction AMP + ATP = 2 ADP. The protein operates within purine metabolism; AMP biosynthesis via salvage pathway; AMP from ADP: step 1/1. In terms of biological role, catalyzes the reversible transfer of the terminal phosphate group between ATP and AMP. Plays an important role in cellular energy homeostasis and in adenine nucleotide metabolism. In Bordetella pertussis (strain Tohama I / ATCC BAA-589 / NCTC 13251), this protein is Adenylate kinase.